The chain runs to 309 residues: Malate dehydrogenase (309 aa).

NAD(+) is bound by residues 9 to 14 and Asp33; that span reads GAGFVG. Residues Arg82 and Arg88 each contribute to the substrate site. NAD(+) contacts are provided by residues Asn95 and 118 to 120; that span reads VNN. The substrate site is built by Asn120 and Arg151. The active-site Proton acceptor is His175.

It belongs to the LDH/MDH superfamily. MDH type 3 family.

The enzyme catalyses (S)-malate + NAD(+) = oxaloacetate + NADH + H(+). Its function is as follows. Catalyzes the reversible oxidation of malate to oxaloacetate. This is Malate dehydrogenase from Roseiflexus sp. (strain RS-1).